Consider the following 257-residue polypeptide: Putative hydro-lyase Bcenmc03_3969 (257 aa).

Belongs to the D-glutamate cyclase family.

In Burkholderia orbicola (strain MC0-3), this protein is Putative hydro-lyase Bcenmc03_3969.